The following is a 434-amino-acid chain: Serine--tRNA ligase (434 aa).

239–241 (TAE) is a binding site for L-serine. 270–272 (RSE) is a binding site for ATP. Glutamate 293 is an L-serine binding site. ATP is bound at residue 357–360 (EISS). An L-serine-binding site is contributed by serine 393.

It belongs to the class-II aminoacyl-tRNA synthetase family. Type-1 seryl-tRNA synthetase subfamily. Homodimer. The tRNA molecule binds across the dimer.

Its subcellular location is the cytoplasm. It carries out the reaction tRNA(Ser) + L-serine + ATP = L-seryl-tRNA(Ser) + AMP + diphosphate + H(+). It catalyses the reaction tRNA(Sec) + L-serine + ATP = L-seryl-tRNA(Sec) + AMP + diphosphate + H(+). It participates in aminoacyl-tRNA biosynthesis; selenocysteinyl-tRNA(Sec) biosynthesis; L-seryl-tRNA(Sec) from L-serine and tRNA(Sec): step 1/1. Catalyzes the attachment of serine to tRNA(Ser). Is also able to aminoacylate tRNA(Sec) with serine, to form the misacylated tRNA L-seryl-tRNA(Sec), which will be further converted into selenocysteinyl-tRNA(Sec). The polypeptide is Serine--tRNA ligase (Mesorhizobium japonicum (strain LMG 29417 / CECT 9101 / MAFF 303099) (Mesorhizobium loti (strain MAFF 303099))).